Reading from the N-terminus, the 91-residue chain is Small ribosomal subunit protein bS16 (91 aa).

The protein belongs to the bacterial ribosomal protein bS16 family.

In Latilactobacillus sakei subsp. sakei (strain 23K) (Lactobacillus sakei subsp. sakei), this protein is Small ribosomal subunit protein bS16.